The chain runs to 92 residues: Auxin-responsive protein SAUR28 (92 aa).

Belongs to the ARG7 family. Higher expression in thermo-responsive cultivars (e.g. cv. Alst-1, cv. Ang-0 and cv. Com-0) than in low thermo-responsive cultivars (e.g. cv. Dja-1, cv. El-0 and cv. Kon).

Its subcellular location is the cell membrane. Functionally, functions as a positive effector of cell expansion through modulation of auxin transport. Involved in thermo-responsiveness of plant architecture. Enhances plasma membrane H(+)-ATPase. The sequence is that of Auxin-responsive protein SAUR28 from Arabidopsis thaliana (Mouse-ear cress).